Here is a 223-residue protein sequence, read N- to C-terminus: DnaJ homolog subfamily B member 9 (223 aa).

Positions 1 to 23 (MATPQSIFIFAICILMITELILA) are cleaved as a signal peptide. The J domain occupies 26 to 90 (SYYDILGVPK…NRRKEYDTLG (65 aa)). Residues 91 to 223 (HSAFTSGKGQ…VTTYTDCSGQ (133 aa)) are divergent targeting domain. Phosphoserine is present on S133.

In terms of assembly, interacts with HSPA5/BiP; interaction is direct. Interacts with ERN1/IRE1 (via the luminal region). Interacts with DERL1. Widely expressed. Expressed at highest level in the liver, placenta and kidney.

The protein resides in the endoplasmic reticulum lumen. Its function is as follows. Co-chaperone for Hsp70 protein HSPA5/BiP that acts as a key repressor of the ERN1/IRE1-mediated unfolded protein response (UPR). J domain-containing co-chaperones stimulate the ATPase activity of Hsp70 proteins and are required for efficient substrate recognition by Hsp70 proteins. In the unstressed endoplasmic reticulum, interacts with the luminal region of ERN1/IRE1 and selectively recruits HSPA5/BiP: HSPA5/BiP disrupts the dimerization of the active ERN1/IRE1 luminal region, thereby inactivating ERN1/IRE1. Also involved in endoplasmic reticulum-associated degradation (ERAD) of misfolded proteins. Required for survival of B-cell progenitors and normal antibody production. The polypeptide is DnaJ homolog subfamily B member 9 (DNAJB9) (Homo sapiens (Human)).